The following is a 396-amino-acid chain: S-adenosylmethionine decarboxylase proenzyme (396 aa).

Active-site residues include Glu-29 and Glu-32. Ser-88 acts as the Schiff-base intermediate with substrate; via pyruvic acid in catalysis. A Pyruvic acid (Ser); by autocatalysis modification is found at Ser-88. Residue Cys-102 is the Proton donor; for catalytic activity of the active site. Active-site proton acceptor; for processing activity residues include Ser-287 and His-301.

The protein belongs to the eukaryotic AdoMetDC family. Pyruvate serves as cofactor. In terms of processing, is synthesized initially as an inactive proenzyme. Formation of the active enzyme involves a self-maturation process in which the active site pyruvoyl group is generated from an internal serine residue via an autocatalytic post-translational modification. Two non-identical subunits are generated from the proenzyme in this reaction, and the pyruvate is formed at the N-terminus of the alpha chain, which is derived from the carboxyl end of the proenzyme. The post-translation cleavage follows an unusual pathway, termed non-hydrolytic serinolysis, in which the side chain hydroxyl group of the serine supplies its oxygen atom to form the C-terminus of the beta chain, while the remainder of the serine residue undergoes an oxidative deamination to produce ammonia and the pyruvoyl group blocking the N-terminus of the alpha chain.

The catalysed reaction is S-adenosyl-L-methionine + H(+) = S-adenosyl 3-(methylsulfanyl)propylamine + CO2. It participates in amine and polyamine biosynthesis; S-adenosylmethioninamine biosynthesis; S-adenosylmethioninamine from S-adenosyl-L-methionine: step 1/1. In terms of biological role, catalyzes the decarboxylation of S-adenosylmethionine, a key step in the biosynthetic pathway for spermidine and spermine. It is essential for normal growth, sporulation, and maintenance of ds-RNA virus. In Saccharomyces cerevisiae (strain ATCC 204508 / S288c) (Baker's yeast), this protein is S-adenosylmethionine decarboxylase proenzyme (SPE2).